Reading from the N-terminus, the 369-residue chain is Actin-related protein 2/3 complex subunit 1B-A (369 aa).

7 WD repeats span residues F6–I45, E50–T89, R94–K135, P140–R179, S200–S239, T242–G282, and L321–K364.

Belongs to the WD repeat ARPC1 family. Component of the Arp2/3 complex composed of actr2/arp2, actr3/arp3, arpc1 (arpc1a or arpc1b), arpc2, arpc3, arpc4 and arpc5.

The protein resides in the cytoplasm. The protein localises to the cytoskeleton. Its subcellular location is the nucleus. Component of the Arp2/3 complex, a multiprotein complex that mediates actin polymerization upon stimulation by nucleation-promoting factor (NPF). The Arp2/3 complex mediates the formation of branched actin networks in the cytoplasm, providing the force for cell motility. In addition to its role in the cytoplasmic cytoskeleton, the Arp2/3 complex also promotes actin polymerization in the nucleus, thereby regulating gene transcription and repair of damaged DNA. The Arp2/3 complex promotes homologous recombination (HR) repair in response to DNA damage by promoting nuclear actin polymerization, leading to drive motility of double-strand breaks (DSBs). The sequence is that of Actin-related protein 2/3 complex subunit 1B-A (arpc1b-a) from Xenopus laevis (African clawed frog).